Consider the following 238-residue polypeptide: Pyridoxine 5'-phosphate synthase (238 aa).

Residue asparagine 6 coordinates 3-amino-2-oxopropyl phosphate. 8–9 (DH) lines the 1-deoxy-D-xylulose 5-phosphate pocket. Arginine 17 provides a ligand contact to 3-amino-2-oxopropyl phosphate. The active-site Proton acceptor is the histidine 42. Arginine 44 and histidine 49 together coordinate 1-deoxy-D-xylulose 5-phosphate. Catalysis depends on glutamate 69, which acts as the Proton acceptor. Threonine 99 is a 1-deoxy-D-xylulose 5-phosphate binding site. Histidine 190 serves as the catalytic Proton donor. 3-amino-2-oxopropyl phosphate-binding positions include glycine 191 and 212 to 213 (GH).

This sequence belongs to the PNP synthase family. Homooctamer; tetramer of dimers.

It localises to the cytoplasm. It catalyses the reaction 3-amino-2-oxopropyl phosphate + 1-deoxy-D-xylulose 5-phosphate = pyridoxine 5'-phosphate + phosphate + 2 H2O + H(+). It participates in cofactor biosynthesis; pyridoxine 5'-phosphate biosynthesis; pyridoxine 5'-phosphate from D-erythrose 4-phosphate: step 5/5. In terms of biological role, catalyzes the complicated ring closure reaction between the two acyclic compounds 1-deoxy-D-xylulose-5-phosphate (DXP) and 3-amino-2-oxopropyl phosphate (1-amino-acetone-3-phosphate or AAP) to form pyridoxine 5'-phosphate (PNP) and inorganic phosphate. This is Pyridoxine 5'-phosphate synthase from Chlorobium phaeobacteroides (strain BS1).